A 588-amino-acid polypeptide reads, in one-letter code: Mediator of RNA polymerase II transcription subunit 26 (588 aa).

The TFIIS N-terminal domain maps to 10–87 (QMRDRLLQAI…RSWQKLIEPV (78 aa)). Disordered stretches follow at residues 112–393 (RPEM…YTVN) and 412–441 (KLTF…PTEQ). The segment covering 123–133 (SIHDLKNRNDI) has biased composition (basic and acidic residues). Polar residues predominate over residues 179 to 191 (PLPTNGISGSPES). Over residues 207-218 (SRLEPSDNEKHS) the composition is skewed to basic and acidic residues. The span at 314–325 (SPLPLAQPPTPP) shows a compositional bias: pro residues. 2 positions are modified to phosphoserine: Ser-435 and Ser-458.

The protein belongs to the Mediator complex subunit 26 family. In terms of assembly, component of the Mediator complex, which is composed of MED1, MED4, MED6, MED7, MED8, MED9, MED10, MED11, MED12, MED13, MED13L, MED14, MED15, MED16, MED17, MED18, MED19, MED20, MED21, MED22, MED23, MED24, MED25, MED26, MED27, MED29, MED30, MED31, CCNC, CDK8 and CDC2L6/CDK11. The MED12, MED13, CCNC and CDK8 subunits form a distinct module termed the CDK8 module. Mediator containing the CDK8 module is less active than Mediator lacking this module in supporting transcriptional activation. Individual preparations of the Mediator complex lacking one or more distinct subunits have been variously termed ARC, CRSP, DRIP, PC2, SMCC and TRAP. Interacts with CEBPB (when not methylated).

The protein localises to the nucleus. Functionally, component of the Mediator complex, a coactivator involved in the regulated transcription of nearly all RNA polymerase II-dependent genes. Mediator functions as a bridge to convey information from gene-specific regulatory proteins to the basal RNA polymerase II transcription machinery. Mediator is recruited to promoters by direct interactions with regulatory proteins and serves as a scaffold for the assembly of a functional pre-initiation complex with RNA polymerase II and the general transcription factors. This Mus musculus (Mouse) protein is Mediator of RNA polymerase II transcription subunit 26 (Med26).